The following is a 608-amino-acid chain: Phosphogluconate dehydratase (608 aa).

Cys-154 and Cys-221 together coordinate [4Fe-4S] cluster.

The protein belongs to the IlvD/Edd family. [4Fe-4S] cluster serves as cofactor.

The enzyme catalyses 6-phospho-D-gluconate = 2-dehydro-3-deoxy-6-phospho-D-gluconate + H2O. Its pathway is carbohydrate metabolism; Entner-Doudoroff pathway. Functionally, catalyzes the dehydration of 6-phospho-D-gluconate to 2-dehydro-3-deoxy-6-phospho-D-gluconate. The sequence is that of Phosphogluconate dehydratase from Helicobacter pylori (strain ATCC 700392 / 26695) (Campylobacter pylori).